Here is a 71-residue protein sequence, read N- to C-terminus: Small ribosomal subunit protein eS17 (71 aa).

The protein belongs to the eukaryotic ribosomal protein eS17 family.

The sequence is that of Small ribosomal subunit protein eS17 from Pyrobaculum aerophilum (strain ATCC 51768 / DSM 7523 / JCM 9630 / CIP 104966 / NBRC 100827 / IM2).